Consider the following 334-residue polypeptide: Glyceraldehyde-3-phosphate dehydrogenase (334 aa).

NAD(+)-binding positions include 12 to 13, D35, R79, and S121; that span reads RI. Residues 152–154, T183, R198, 211–212, and R234 contribute to the D-glyceraldehyde 3-phosphate site; these read SCT and TG. C153 acts as the Nucleophile in catalysis. An NAD(+)-binding site is contributed by N315.

This sequence belongs to the glyceraldehyde-3-phosphate dehydrogenase family. In terms of assembly, homotetramer.

The protein resides in the cytoplasm. The catalysed reaction is D-glyceraldehyde 3-phosphate + phosphate + NAD(+) = (2R)-3-phospho-glyceroyl phosphate + NADH + H(+). It functions in the pathway carbohydrate degradation; glycolysis; pyruvate from D-glyceraldehyde 3-phosphate: step 1/5. Catalyzes the oxidative phosphorylation of glyceraldehyde 3-phosphate (G3P) to 1,3-bisphosphoglycerate (BPG) using the cofactor NAD. The first reaction step involves the formation of a hemiacetal intermediate between G3P and a cysteine residue, and this hemiacetal intermediate is then oxidized to a thioester, with concomitant reduction of NAD to NADH. The reduced NADH is then exchanged with the second NAD, and the thioester is attacked by a nucleophilic inorganic phosphate to produce BPG. The chain is Glyceraldehyde-3-phosphate dehydrogenase (gap) from Corynebacterium glutamicum (strain ATCC 13032 / DSM 20300 / JCM 1318 / BCRC 11384 / CCUG 27702 / LMG 3730 / NBRC 12168 / NCIMB 10025 / NRRL B-2784 / 534).